Here is a 364-residue protein sequence, read N- to C-terminus: 4-hydroxythreonine-4-phosphate dehydrogenase (364 aa).

Substrate-binding residues include H148 and T149. A divalent metal cation is bound by residues H177, H216, and H301. K309, N318, and R327 together coordinate substrate.

Belongs to the PdxA family. As to quaternary structure, homodimer. It depends on Zn(2+) as a cofactor. Requires Mg(2+) as cofactor. Co(2+) serves as cofactor.

It is found in the cytoplasm. It catalyses the reaction 4-(phosphooxy)-L-threonine + NAD(+) = 3-amino-2-oxopropyl phosphate + CO2 + NADH. The protein operates within cofactor biosynthesis; pyridoxine 5'-phosphate biosynthesis; pyridoxine 5'-phosphate from D-erythrose 4-phosphate: step 4/5. In terms of biological role, catalyzes the NAD(P)-dependent oxidation of 4-(phosphooxy)-L-threonine (HTP) into 2-amino-3-oxo-4-(phosphooxy)butyric acid which spontaneously decarboxylates to form 3-amino-2-oxopropyl phosphate (AHAP). The polypeptide is 4-hydroxythreonine-4-phosphate dehydrogenase (Campylobacter jejuni subsp. jejuni serotype O:2 (strain ATCC 700819 / NCTC 11168)).